The following is a 207-amino-acid chain: Large ribosomal subunit protein uL4 (207 aa).

This sequence belongs to the universal ribosomal protein uL4 family. In terms of assembly, part of the 50S ribosomal subunit.

Its function is as follows. One of the primary rRNA binding proteins, this protein initially binds near the 5'-end of the 23S rRNA. It is important during the early stages of 50S assembly. It makes multiple contacts with different domains of the 23S rRNA in the assembled 50S subunit and ribosome. In terms of biological role, forms part of the polypeptide exit tunnel. The chain is Large ribosomal subunit protein uL4 from Rickettsia peacockii (strain Rustic).